Here is a 132-residue protein sequence, read N- to C-terminus: Phosphoribosyl-AMP cyclohydrolase (132 aa).

Asp-86 contributes to the Mg(2+) binding site. Residue Cys-87 participates in Zn(2+) binding. Mg(2+) is bound by residues Asp-88 and Asp-90. Positions 103 and 110 each coordinate Zn(2+).

Belongs to the PRA-CH family. In terms of assembly, homodimer. Mg(2+) serves as cofactor. Requires Zn(2+) as cofactor.

It localises to the cytoplasm. It catalyses the reaction 1-(5-phospho-beta-D-ribosyl)-5'-AMP + H2O = 1-(5-phospho-beta-D-ribosyl)-5-[(5-phospho-beta-D-ribosylamino)methylideneamino]imidazole-4-carboxamide. Its pathway is amino-acid biosynthesis; L-histidine biosynthesis; L-histidine from 5-phospho-alpha-D-ribose 1-diphosphate: step 3/9. Its function is as follows. Catalyzes the hydrolysis of the adenine ring of phosphoribosyl-AMP. This Haloquadratum walsbyi (strain DSM 16790 / HBSQ001) protein is Phosphoribosyl-AMP cyclohydrolase.